Consider the following 183-residue polypeptide: Capsid protein (183 aa).

Residues 136–183 (NAPILSTLPETTVVRRRGRSPRRRTPSPRRRRSQSPRRRRSQSRESQC) form a disordered region. Over residues 149 to 176 (VRRRGRSPRRRTPSPRRRRSQSPRRRRS) the composition is skewed to basic residues. Phosphoserine; by host occurs at positions 155, 162, and 170. A 1; half-length repeat occupies 155-161 (SPRRRTP). Positions 155–177 (SPRRRTPSPRRRRSQSPRRRRSQ) are 3 X 8 AA repeats of S-P-R-R-R-[PR]-S-Q. Residues 158–175 (RRTPSPRRRRSQSPRRRR) carry the Bipartite nuclear localization signal motif. 2 consecutive repeat copies span residues 162–169 (SPRRRRSQ) and 170–177 (SPRRRRSQ). The segment at 177–183 (QSRESQC) is RNA binding.

This sequence belongs to the orthohepadnavirus core antigen family. As to quaternary structure, homodimerizes, then multimerizes. Interacts with cytosol exposed regions of viral L glycoprotein present in the reticulum-to-Golgi compartment. Interacts with human FLNB. Phosphorylated form interacts with host importin alpha; this interaction depends on the exposure of the NLS, which itself depends upon genome maturation and/or phosphorylation of the capsid protein. Interacts with host NUP153. Phosphorylated by host SRPK1, SRPK2, and maybe protein kinase C or GAPDH. Phosphorylation is critical for pregenomic RNA packaging. Protein kinase C phosphorylation is stimulated by HBx protein and may play a role in transport of the viral genome to the nucleus at the late step during the viral replication cycle.

The protein localises to the virion. It localises to the host cytoplasm. Self assembles to form an icosahedral capsid. Most capsids appear to be large particles with an icosahedral symmetry of T=4 and consist of 240 copies of capsid protein, though a fraction forms smaller T=3 particles consisting of 180 capsid proteins. Entering capsids are transported along microtubules to the nucleus. Phosphorylation of the capsid is thought to induce exposure of nuclear localization signal in the C-terminal portion of the capsid protein that allows binding to the nuclear pore complex via the importin (karyopherin-) alpha and beta. Capsids are imported in intact form through the nuclear pore into the nuclear basket, where it probably binds NUP153. Only capsids that contain the mature viral genome can release the viral DNA and capsid protein into the nucleoplasm. Immature capsids get stuck in the basket. Capsids encapsulate the pre-genomic RNA and the P protein. Pre-genomic RNA is reverse-transcribed into DNA while the capsid is still in the cytoplasm. The capsid can then either be directed to the nucleus, providing more genomes for transcription, or bud through the endoplasmic reticulum to provide new virions. The chain is Capsid protein from Hepatitis B virus genotype B/C subtype adw (isolate Okinawa/pODW282/1998) (HBV-B).